A 491-amino-acid polypeptide reads, in one-letter code: COP9 signalosome complex subunit 1 (491 aa).

Residues 269–431 (CLLLASFDHC…KILYARDVDQ (163 aa)) enclose the PCI domain. Positions 465–491 (HVKSPPREGSQGELTPANSQSRMSTNM) are disordered. Residues Ser468 and Ser474 each carry the phosphoserine modification. Over residues 476–491 (GELTPANSQSRMSTNM) the composition is skewed to polar residues. Position 479 is a phosphothreonine (Thr479). Position 483 is a phosphoserine (Ser483).

This sequence belongs to the CSN1 family. Component of the CSN complex, composed of COPS1/GPS1, COPS2, COPS3, COPS4, COPS5, COPS6, COPS7 (COPS7A or COPS7B), COPS8 and COPS9 isoform 1. In the complex, it probably interacts directly with COPS2, COPS3, COPS4 and COPS5. Interacts directly with inositol kinase ITPK1. Interacts with CAPN8. Interacts with USP48. Interacts with ASB4; this interaction negatively regulates GPS1. As to expression, widely expressed.

The protein resides in the cytoplasm. Its subcellular location is the nucleus. Its function is as follows. Essential component of the COP9 signalosome complex (CSN), a complex involved in various cellular and developmental processes. The CSN complex is an essential regulator of the ubiquitin (Ubl) conjugation pathway by mediating the deneddylation of the cullin subunits of SCF-type E3 ligase complexes, leading to decrease the Ubl ligase activity of SCF-type complexes such as SCF, CSA or DDB2. The complex is also involved in phosphorylation of p53/TP53, c-jun/JUN, IkappaBalpha/NFKBIA, ITPK1 and IRF8/ICSBP, possibly via its association with CK2 and PKD kinases. CSN-dependent phosphorylation of TP53 and JUN promotes and protects degradation by the Ubl system, respectively. Suppresses G-protein- and mitogen-activated protein kinase-mediated signal transduction. This is COP9 signalosome complex subunit 1 (GPS1) from Homo sapiens (Human).